The sequence spans 672 residues: Amidase chyE (672 aa).

Catalysis depends on Cys-2, which acts as the Nucleophile. The Glutamine amidotransferase type-2 domain occupies 2 to 219 (CGISAFLCHP…PGHYLISRPN (218 aa)). One can recognise an Asparagine synthetase domain in the interval 250-639 (VRKRLLEAVK…TQEAVEKAFT (390 aa)).

The protein belongs to the asparagine synthetase family.

Its pathway is pigment biosynthesis. Functionally, amidase; part of the gene cluster that mediates the biosynthesis of the yellow pigment chrysogine. the NRPS chyA mediates the condensation of anthranilic acid and alanine into the intermediate 2-(2-aminopropanamido)benzoic acid. The remainder of the pathway is highly branched yielding at least 13 chrysogine-related compounds. The malonyl transferase chyE converts 2-(2-aminopropanamido)benzoic acid and 2-(2-aminopropanamido)benzamidine into 2-(2-(2-carboxyacetamido)propanamido)benzoic acid and 3-((1-((2-carbamoylphenyl)amino)-1-oxopropan-2-yl)amino)-3-oxopropanoic acid, respectively. ChyD is an amidase, being responsible for the amidation of the carboxylic acid moiety of 2-(2-aminopropanamido)benzoic acid, 2-(2-(2-carboxyacetamido)propanamido)benzoic acid and 2-(2-((4-amino-1-carboxy-4-oxobutyl)amino)propanamido)benzoic acid. ChyC is involved in the same reactions as ChyD, but plays a more minor role in the amidation reactions compared to chyD. The oxidoreductases chyH and chyM are involved in oxidation reactions that form N-pyruvoylanthranilamide from 2-(2-aminopropanamido)benzamidine and (1-((2-carbamoylphenyl)amino)-1-oxopropan-2-yl)glutamine, respectively. N-pyruvoylanthranilamide is further converted via two further branches in the pathway, yielding chrysogine and additional chrysogine-related coumpounds. Chrysogine is likely formed by a spontaneous ring closure from N-pyruvoylanthranilamide. This is Amidase chyE from Penicillium rubens (strain ATCC 28089 / DSM 1075 / NRRL 1951 / Wisconsin 54-1255) (Penicillium chrysogenum).